Reading from the N-terminus, the 432-residue chain is Tyrosine--tRNA ligase (432 aa).

The short motif at 46 to 55 (PTRPDLHLGH) is the 'HIGH' region element. The 'KMSKS' region motif lies at 232–236 (KMSKS). Lysine 235 contacts ATP. One can recognise an S4 RNA-binding domain in the interval 369–430 (IWVARLFTLA…GKDRFVRVRL (62 aa)).

It belongs to the class-I aminoacyl-tRNA synthetase family. TyrS type 2 subfamily. In terms of assembly, homodimer.

It localises to the cytoplasm. It carries out the reaction tRNA(Tyr) + L-tyrosine + ATP = L-tyrosyl-tRNA(Tyr) + AMP + diphosphate + H(+). In terms of biological role, catalyzes the attachment of tyrosine to tRNA(Tyr) in a two-step reaction: tyrosine is first activated by ATP to form Tyr-AMP and then transferred to the acceptor end of tRNA(Tyr). This chain is Tyrosine--tRNA ligase, found in Thermus thermophilus (strain ATCC BAA-163 / DSM 7039 / HB27).